We begin with the raw amino-acid sequence, 323 residues long: tRNA U34 carboxymethyltransferase (323 aa).

Carboxy-S-adenosyl-L-methionine-binding positions include Lys91, Trp105, Lys110, Gly130, 152–154, 181–182, Met196, Tyr200, and Arg315; these read DPT and IE.

This sequence belongs to the class I-like SAM-binding methyltransferase superfamily. CmoB family. In terms of assembly, homotetramer.

The catalysed reaction is carboxy-S-adenosyl-L-methionine + 5-hydroxyuridine(34) in tRNA = 5-carboxymethoxyuridine(34) in tRNA + S-adenosyl-L-homocysteine + H(+). Functionally, catalyzes carboxymethyl transfer from carboxy-S-adenosyl-L-methionine (Cx-SAM) to 5-hydroxyuridine (ho5U) to form 5-carboxymethoxyuridine (cmo5U) at position 34 in tRNAs. This is tRNA U34 carboxymethyltransferase from Salmonella agona (strain SL483).